We begin with the raw amino-acid sequence, 193 residues long: dCTP deaminase (193 aa).

DCTP-binding positions include 110–115, Asp-128, 136–138, Tyr-171, Lys-178, and Gln-182; these read RSSLAR and VLE. The Proton donor/acceptor role is filled by Glu-138.

Belongs to the dCTP deaminase family. As to quaternary structure, homotrimer.

The enzyme catalyses dCTP + H2O + H(+) = dUTP + NH4(+). Its pathway is pyrimidine metabolism; dUMP biosynthesis; dUMP from dCTP (dUTP route): step 1/2. Catalyzes the deamination of dCTP to dUTP. The chain is dCTP deaminase from Aeromonas hydrophila subsp. hydrophila (strain ATCC 7966 / DSM 30187 / BCRC 13018 / CCUG 14551 / JCM 1027 / KCTC 2358 / NCIMB 9240 / NCTC 8049).